Reading from the N-terminus, the 257-residue chain is Hydroxyacylglutathione hydrolase (257 aa).

Zn(2+) contacts are provided by His58, His60, Asp62, His63, His116, Asp135, and His173.

This sequence belongs to the metallo-beta-lactamase superfamily. Glyoxalase II family. In terms of assembly, monomer. Requires Zn(2+) as cofactor.

It catalyses the reaction an S-(2-hydroxyacyl)glutathione + H2O = a 2-hydroxy carboxylate + glutathione + H(+). The protein operates within secondary metabolite metabolism; methylglyoxal degradation; (R)-lactate from methylglyoxal: step 2/2. Its function is as follows. Thiolesterase that catalyzes the hydrolysis of S-D-lactoyl-glutathione to form glutathione and D-lactic acid. This is Hydroxyacylglutathione hydrolase from Brucella melitensis biotype 1 (strain ATCC 23456 / CCUG 17765 / NCTC 10094 / 16M).